The following is a 73-amino-acid chain: Putative membrane protein insertion efficiency factor (73 aa).

This sequence belongs to the UPF0161 family.

It is found in the cell inner membrane. Could be involved in insertion of integral membrane proteins into the membrane. The polypeptide is Putative membrane protein insertion efficiency factor (Neisseria meningitidis serogroup C (strain 053442)).